Here is a 567-residue protein sequence, read N- to C-terminus: Proline--tRNA ligase (567 aa).

It belongs to the class-II aminoacyl-tRNA synthetase family. ProS type 1 subfamily. Homodimer.

It localises to the cytoplasm. It catalyses the reaction tRNA(Pro) + L-proline + ATP = L-prolyl-tRNA(Pro) + AMP + diphosphate. Catalyzes the attachment of proline to tRNA(Pro) in a two-step reaction: proline is first activated by ATP to form Pro-AMP and then transferred to the acceptor end of tRNA(Pro). As ProRS can inadvertently accommodate and process non-cognate amino acids such as alanine and cysteine, to avoid such errors it has two additional distinct editing activities against alanine. One activity is designated as 'pretransfer' editing and involves the tRNA(Pro)-independent hydrolysis of activated Ala-AMP. The other activity is designated 'posttransfer' editing and involves deacylation of mischarged Ala-tRNA(Pro). The misacylated Cys-tRNA(Pro) is not edited by ProRS. The sequence is that of Proline--tRNA ligase from Stenotrophomonas maltophilia (strain R551-3).